The following is a 905-amino-acid chain: A disintegrin and metalloproteinase with thrombospondin motifs 8 (905 aa).

An N-terminal signal peptide occupies residues M1–G28. A propeptide spanning residues A29–R228 is cleaved from the precursor. Disordered stretches follow at residues P139–D163 and N186–R225. A compositionally biased stretch (basic and acidic residues) spans E191–K215. Residues R234–P444 enclose the Peptidase M12B domain. Intrachain disulfides connect C309–C362, C338–C344, C356–C439, C394–C423, C478–C502, C487–C523, C517–C528, C554–C591, C558–C596, and C569–C581. Residue H378 participates in Zn(2+) binding. E379 is an active-site residue. Residues H382 and H388 each coordinate Zn(2+). 3 N-linked (GlcNAc...) asparagine glycosylation sites follow: N415, N480, and N506. The 89-residue stretch at G453 to V541 folds into the Disintegrin domain. The region spanning D542 to P597 is the TSP type-1 1 domain. N615 carries an N-linked (GlcNAc...) asparagine glycan. The tract at residues R706–L847 is spacer. One can recognise a TSP type-1 2 domain in the interval P848–P904. A disordered region spans residues D877–L905.

Zn(2+) is required as a cofactor. Post-translationally, the precursor is cleaved by a furin endopeptidase. Glycosylated. Can be O-fucosylated by POFUT2 on a serine or a threonine residue found within the consensus sequence C1-X(2)-(S/T)-C2-G of the TSP type-1 repeat domains where C1 and C2 are the first and second cysteine residue of the repeat, respectively. Fucosylated repeats can then be further glycosylated by the addition of a beta-1,3-glucose residue by the glucosyltransferase, B3GALTL. Fucosylation mediates the efficient secretion of ADAMTS family members. Can also be C-glycosylated with one or two mannose molecules on tryptophan residues within the consensus sequence W-X-X-W of the TPRs, and N-glycosylated. These other glycosylations can also facilitate secretion. Expressed specifically in adult lung and heart and low expression during mouse development.

The protein localises to the secreted. The protein resides in the extracellular space. Its subcellular location is the extracellular matrix. Its function is as follows. Has anti-angiogenic properties. This Mus musculus (Mouse) protein is A disintegrin and metalloproteinase with thrombospondin motifs 8 (Adamts8).